The sequence spans 246 residues: MQHQDVAIIIPSRLSSTRLKQKPLQLIGSITLIERVFKQINQANLEHTYVATDSEEISNIIKKVRGKVIFTDSAIPTGTDRTYEAFKLIPNNQNINYIVNVQGDMPFIEPSSVLKIIEYLKNSEYDIVTPVVKVDRESVEASSNVTVAVDSAGKALYFSRSLIPNGAEEFLYHVGMYGFRKNALEKFVSLKPTFLEKTERLEQLRVLENGMTIGTCLVENVPISVDTEEDLKKAVKFYENISKLGL.

This sequence belongs to the KdsB family.

It is found in the cytoplasm. The enzyme catalyses 3-deoxy-alpha-D-manno-oct-2-ulosonate + CTP = CMP-3-deoxy-beta-D-manno-octulosonate + diphosphate. It participates in nucleotide-sugar biosynthesis; CMP-3-deoxy-D-manno-octulosonate biosynthesis; CMP-3-deoxy-D-manno-octulosonate from 3-deoxy-D-manno-octulosonate and CTP: step 1/1. The protein operates within bacterial outer membrane biogenesis; lipopolysaccharide biosynthesis. Its function is as follows. Activates KDO (a required 8-carbon sugar) for incorporation into bacterial lipopolysaccharide in Gram-negative bacteria. The polypeptide is 3-deoxy-manno-octulosonate cytidylyltransferase (Rickettsia akari (strain Hartford)).